Here is a 299-residue protein sequence, read N- to C-terminus: 4-hydroxy-tetrahydrodipicolinate synthase (299 aa).

T45 provides a ligand contact to pyruvate. Y133 (proton donor/acceptor) is an active-site residue. K161 acts as the Schiff-base intermediate with substrate in catalysis. Pyruvate is bound at residue I203.

It belongs to the DapA family. As to quaternary structure, homotetramer; dimer of dimers.

The protein localises to the cytoplasm. The enzyme catalyses L-aspartate 4-semialdehyde + pyruvate = (2S,4S)-4-hydroxy-2,3,4,5-tetrahydrodipicolinate + H2O + H(+). The protein operates within amino-acid biosynthesis; L-lysine biosynthesis via DAP pathway; (S)-tetrahydrodipicolinate from L-aspartate: step 3/4. In terms of biological role, catalyzes the condensation of (S)-aspartate-beta-semialdehyde [(S)-ASA] and pyruvate to 4-hydroxy-tetrahydrodipicolinate (HTPA). This chain is 4-hydroxy-tetrahydrodipicolinate synthase, found in Blochmanniella pennsylvanica (strain BPEN).